Consider the following 263-residue polypeptide: Acyl-[acyl-carrier-protein]--UDP-N-acetylglucosamine O-acyltransferase (263 aa).

It belongs to the transferase hexapeptide repeat family. LpxA subfamily. Homotrimer.

Its subcellular location is the cytoplasm. The catalysed reaction is a (3R)-hydroxyacyl-[ACP] + UDP-N-acetyl-alpha-D-glucosamine = a UDP-3-O-[(3R)-3-hydroxyacyl]-N-acetyl-alpha-D-glucosamine + holo-[ACP]. Its pathway is glycolipid biosynthesis; lipid IV(A) biosynthesis; lipid IV(A) from (3R)-3-hydroxytetradecanoyl-[acyl-carrier-protein] and UDP-N-acetyl-alpha-D-glucosamine: step 1/6. Its function is as follows. Involved in the biosynthesis of lipid A, a phosphorylated glycolipid that anchors the lipopolysaccharide to the outer membrane of the cell. The chain is Acyl-[acyl-carrier-protein]--UDP-N-acetylglucosamine O-acyltransferase from Aeromonas salmonicida (strain A449).